The primary structure comprises 228 residues: Extracellular protease inhibitor 10 (228 aa).

Positions 1-22 are cleaved as a signal peptide; the sequence is MKSAFTLSLALVAVTATISAAA. Kazal-like domains follow at residues 23–72, 90–127, and 156–208; these read DDNC…ECAS, TSGT…AKCK, and GYQG…EGTL. N-linked (GlcNAc...) asparagine glycosylation occurs at asparagine 25. 3 disulfide bridges follow: cysteine 26–cysteine 56, cysteine 30–cysteine 49, and cysteine 38–cysteine 70. The interval 69 to 92 is disordered; sequence ECASTPASSATPSPVTSSTGSTSG. The segment covering 71–92 has biased composition (low complexity); it reads ASTPASSATPSPVTSSTGSTSG. 4 disulfides stabilise this stretch: cysteine 96/cysteine 126, cysteine 100/cysteine 119, cysteine 162/cysteine 193, and cysteine 167/cysteine 186. An N-linked (GlcNAc...) asparagine glycan is attached at asparagine 199.

As to quaternary structure, interacts with host subtilisin-like protease P69B.

The protein resides in the secreted. Secreted effector that interacts with and inhibits the pathogenesis-related P69B subtilisin-like serine protease of host tomato. Inhibition of host proteases by a pathogen extracellular protease inhibitor forms a specific type of defense-counterdefense mechanism between plants and microbial pathogens. The protein is Extracellular protease inhibitor 10 of Phytophthora infestans (strain T30-4) (Potato late blight agent).